Reading from the N-terminus, the 218-residue chain is Claudin-5 (218 aa).

The Cytoplasmic segment spans residues 1-7; the sequence is MGSAALE. The helical transmembrane segment at 8–28 threads the bilayer; sequence ILGLVLCLVGWVGLILACGLP. Topologically, residues 29–81 are extracellular; that stretch reads MWQVTAFLDHNIVTAQTTWKGLWMSCVVQSTGHMQCKVYESVLALSAEVQAAR. Residues 82-102 form a helical membrane-spanning segment; it reads ALTVGAVLLALVALFVTLTGA. Residues 103–123 are Cytoplasmic-facing; that stretch reads QCTTCVAPGPVKARVALTGGA. The helical transmembrane segment at 124–144 threads the bilayer; it reads LYAVCGLLALVPLCWFANIVV. Topologically, residues 145-160 are extracellular; sequence REFYDPTVPVSQKYEL. A helical membrane pass occupies residues 161–181; sequence GAALYIGWAASALLMCGGGLV. Topologically, residues 182–218 are cytoplasmic; that stretch reads CCGAWVCTGRPEFSFPVKYSAPRRPTANGDYDKKNYV. The tract at residues 217-218 is interactions with TJP1, TJP2 and TJP3; the sequence is YV.

It belongs to the claudin family. In terms of assembly, interacts with MPDZ. Directly interacts with TJP1/ZO-1, TJP2/ZO-2 and TJP3/ZO-3. As to expression, widely expressed with highest levels in the lung.

Its subcellular location is the cell junction. The protein resides in the tight junction. The protein localises to the cell membrane. Its function is as follows. Plays a major role in tight junction-specific obliteration of the intercellular space, through calcium-independent cell-adhesion activity. The chain is Claudin-5 (Cldn5) from Mus musculus (Mouse).